Reading from the N-terminus, the 363-residue chain is Protein arginine N-methyltransferase 2 (363 aa).

2 ANK repeats span residues 22–46 (AAQT…FQDD) and 48–80 (LGWS…AVDK). An RMT2 domain is found at 111–363 (KTSAGDNLVF…RLPIAKMSLI (253 aa)). S-adenosyl-L-methionine is bound by residues Phe120, 186 to 191 (FGLGIV), 209 to 211 (EAH), 236 to 237 (WQ), and Asp265.

Belongs to the class I-like SAM-binding methyltransferase superfamily. RMT2 methyltransferase family. In terms of assembly, monomer.

The protein resides in the cytoplasm. Its subcellular location is the nucleus. In terms of biological role, S-adenosyl-L-methionine-dependent protein-arginine N-methyltransferase that methylates the delta-nitrogen atom of arginine residues to form N5-methylarginine (type IV) in target proteins. Monomethylates ribosomal protein L12. The sequence is that of Protein arginine N-methyltransferase 2 from Cryptococcus neoformans var. neoformans serotype D (strain B-3501A) (Filobasidiella neoformans).